The chain runs to 838 residues: E3 ubiquitin-protein ligase RNF19A (838 aa).

The interval 41 to 61 (DRDLQSSASSVSLPSVKKAPK) is disordered. The segment covering 46-57 (SSASSVSLPSVK) has biased composition (low complexity). The tract at residues 128–351 (DFIECPLCLL…LSPSGCTFWG (224 aa)) is TRIAD supradomain. 18 residues coordinate Zn(2+): Cys-132, Cys-135, Cys-150, His-152, Cys-155, Cys-158, Cys-176, Cys-179, Cys-219, Cys-224, Cys-241, Cys-246, Cys-251, Cys-254, His-259, Cys-264, Cys-301, and Cys-304. The RING-type 1 zinc finger occupies 132-179 (CPLCLLRHSKDRFPDIMTCHHRSCVDCLRQYLRIEISESRVNISCPEC). An IBR-type zinc finger spans residues 199–264 (EKYEEFMLRR…KQIWHPNQTC (66 aa)). The segment at 301–332 (CPRCAAYIIKMNDGSCNHMTCAVCGCEFCWLC) adopts an RING-type 2; atypical zinc-finger fold. Residue Cys-316 is part of the active site. Cys-321, Cys-324, Cys-329, Cys-332, His-340, and Cys-347 together coordinate Zn(2+). Transmembrane regions (helical) follow at residues 368-388 (LVGAPVGIALIAGIAIPAMII) and 424-444 (VIVSPVVAAVTVGIGVPIMLA). Disordered stretches follow at residues 622–685 (SKPS…GNMK) and 700–721 (QQSTNSSEFEAPSLSDSMPSVA). Over residues 630–662 (NSGSSSVDDGSATRSHAGGSSSGLPEGKSSATK) the composition is skewed to polar residues. Ser-631 is modified (phosphoserine). An interaction with CASR region spans residues 660–838 (ATKWSKEATA…ELKVAIQTEI (179 aa)). Residues 671–683 (KKSKSGKLRKKGN) are compositionally biased toward basic residues. Positions 700–717 (QQSTNSSEFEAPSLSDSM) are enriched in polar residues.

Belongs to the RBR family. RNF19 subfamily. In terms of assembly, interacts with UBE2L3 and UBE2L6. Interacts with transcription factor Sp1. Interacts with VCP, CASR, SNCAIP and with some SOD1 variants which cause amyotrophic lateral sclerosis, but not with wild-type SOD1. As to expression, widely expressed, with highest levels in heart. Ubiquitously expressed in the central nervous system.

The protein localises to the membrane. It localises to the cytoplasm. It is found in the cytoskeleton. Its subcellular location is the microtubule organizing center. The protein resides in the centrosome. The enzyme catalyses [E2 ubiquitin-conjugating enzyme]-S-ubiquitinyl-L-cysteine + [acceptor protein]-L-lysine = [E2 ubiquitin-conjugating enzyme]-L-cysteine + [acceptor protein]-N(6)-ubiquitinyl-L-lysine.. It participates in protein modification; protein ubiquitination. E3 ubiquitin-protein ligase which accepts ubiquitin from E2 ubiquitin-conjugating enzymes UBE2L3 and UBE2L6 in the form of a thioester and then directly transfers the ubiquitin to targeted substrates, such as SNCAIP or CASR. Specifically ubiquitinates pathogenic SOD1 variants, which leads to their proteasomal degradation and to neuronal protection. This chain is E3 ubiquitin-protein ligase RNF19A (RNF19A), found in Homo sapiens (Human).